Here is a 64-residue protein sequence, read N- to C-terminus: DNA gyrase inhibitor YacG (64 aa).

Residues Cys-6, Cys-9, Cys-25, and Cys-29 each coordinate Zn(2+).

It belongs to the DNA gyrase inhibitor YacG family. In terms of assembly, interacts with GyrB. Zn(2+) serves as cofactor.

Functionally, inhibits all the catalytic activities of DNA gyrase by preventing its interaction with DNA. Acts by binding directly to the C-terminal domain of GyrB, which probably disrupts DNA binding by the gyrase. The polypeptide is DNA gyrase inhibitor YacG (Haemophilus influenzae (strain ATCC 51907 / DSM 11121 / KW20 / Rd)).